The chain runs to 358 residues: Hydroxyproline O-arabinosyltransferase 3 (358 aa).

The helical; Signal-anchor transmembrane segment at 8–28 (LLFLLGFGFFVVTYNLLTLIV) threads the bilayer.

In terms of tissue distribution, ubiquitous.

The protein localises to the golgi apparatus. It is found in the cis-Golgi network membrane. The catalysed reaction is trans-4-hydroxy-L-prolyl-[protein] + UDP-beta-L-arabinofuranose = O-(beta-L-arabinofuranosyl)-trans-4-hydroxy-L-prolyl-[protein] + UDP + H(+). Glycosyltransferase involved in the O-arabinosylation of several proteins including extensins and small signaling peptides. Catalyzes the transfer of the initial L-arabinose to the hydroxyl group of Hyp residues. Contributes redundantly with HPAT1 and HPAT2 to arabinosylation of EXT3, but main contributor to arabinosylation of CLE peptides. In Arabidopsis thaliana (Mouse-ear cress), this protein is Hydroxyproline O-arabinosyltransferase 3.